Reading from the N-terminus, the 217-residue chain is ATP phosphoribosyltransferase (217 aa).

Belongs to the ATP phosphoribosyltransferase family. Short subfamily. Heteromultimer composed of HisG and HisZ subunits.

It is found in the cytoplasm. The catalysed reaction is 1-(5-phospho-beta-D-ribosyl)-ATP + diphosphate = 5-phospho-alpha-D-ribose 1-diphosphate + ATP. It functions in the pathway amino-acid biosynthesis; L-histidine biosynthesis; L-histidine from 5-phospho-alpha-D-ribose 1-diphosphate: step 1/9. Catalyzes the condensation of ATP and 5-phosphoribose 1-diphosphate to form N'-(5'-phosphoribosyl)-ATP (PR-ATP). Has a crucial role in the pathway because the rate of histidine biosynthesis seems to be controlled primarily by regulation of HisG enzymatic activity. This chain is ATP phosphoribosyltransferase, found in Prochlorococcus marinus (strain MIT 9313).